The sequence spans 446 residues: Baeyer-Villiger oxidase mdpL (446 aa).

The protein belongs to the AflY oxidoreductase family. NADPH serves as cofactor.

Its pathway is secondary metabolite biosynthesis. Baeyer-Villiger oxidase; part of the gene cluster that mediates the biosynthesis of monodictyphenone, a prenyl xanthone derivative. The pathway begins with the synthesis of atrochrysone thioester by the polyketide synthase (PKS) mdpG. The atrochrysone carboxyl ACP thioesterase mdpF then breaks the thioester bond and releases the atrochrysone carboxylic acid from mdpG. The atrochrysone carboxylic acid is then converted to atrochrysone which is further transformed into emodin anthrone. The next step is performed by the anthrone oxygenase mdpH that catalyzes the oxidation of emodinanthrone to emodin. Emodin is further modified to yield monodictyphenone via several steps involving mdpB, mdpC mdpJ, mdpK and mdpL. These enzymes with xptA, xptB and xptC are also proposed to be involved in the synthesis of shamixanthone from emodin. Especially, direct reduction of emodin by the short chain dehydrogenase mdpC followed by dehydration catalyzed by the scytalone dehydratase-like protein mdpB gives loss of oxygen and formation of chrysophanol intermediate in two simple steps. The protein is Baeyer-Villiger oxidase mdpL of Emericella nidulans (strain FGSC A4 / ATCC 38163 / CBS 112.46 / NRRL 194 / M139) (Aspergillus nidulans).